A 444-amino-acid chain; its full sequence is Ribosomal protein uS12 methylthiotransferase RimO (444 aa).

The region spanning 6 to 116 (PNIGFVSLGC…VMEHVHKYVP (111 aa)) is the MTTase N-terminal domain. Residues Cys15, Cys51, Cys80, Cys148, Cys152, and Cys155 each coordinate [4Fe-4S] cluster. Residues 134 to 375 (LTPKHYAYLK…MQLQQEISAA (242 aa)) form the Radical SAM core domain. A TRAM domain is found at 378–444 (QQKIGKTWKV…ADEYDLWGTC (67 aa)).

The protein belongs to the methylthiotransferase family. RimO subfamily. Requires [4Fe-4S] cluster as cofactor.

The protein resides in the cytoplasm. It catalyses the reaction L-aspartate(89)-[ribosomal protein uS12]-hydrogen + (sulfur carrier)-SH + AH2 + 2 S-adenosyl-L-methionine = 3-methylsulfanyl-L-aspartate(89)-[ribosomal protein uS12]-hydrogen + (sulfur carrier)-H + 5'-deoxyadenosine + L-methionine + A + S-adenosyl-L-homocysteine + 2 H(+). In terms of biological role, catalyzes the methylthiolation of an aspartic acid residue of ribosomal protein uS12. This Actinobacillus succinogenes (strain ATCC 55618 / DSM 22257 / CCUG 43843 / 130Z) protein is Ribosomal protein uS12 methylthiotransferase RimO.